The sequence spans 532 residues: Bifunctional purine biosynthesis protein PurH (532 aa).

The MGS-like domain maps to 1-147 (MADRPIRQAL…KNHKDVAIVV (147 aa)).

The protein belongs to the PurH family.

The catalysed reaction is (6R)-10-formyltetrahydrofolate + 5-amino-1-(5-phospho-beta-D-ribosyl)imidazole-4-carboxamide = 5-formamido-1-(5-phospho-D-ribosyl)imidazole-4-carboxamide + (6S)-5,6,7,8-tetrahydrofolate. The enzyme catalyses IMP + H2O = 5-formamido-1-(5-phospho-D-ribosyl)imidazole-4-carboxamide. It functions in the pathway purine metabolism; IMP biosynthesis via de novo pathway; 5-formamido-1-(5-phospho-D-ribosyl)imidazole-4-carboxamide from 5-amino-1-(5-phospho-D-ribosyl)imidazole-4-carboxamide (10-formyl THF route): step 1/1. The protein operates within purine metabolism; IMP biosynthesis via de novo pathway; IMP from 5-formamido-1-(5-phospho-D-ribosyl)imidazole-4-carboxamide: step 1/1. The polypeptide is Bifunctional purine biosynthesis protein PurH (Haemophilus influenzae (strain ATCC 51907 / DSM 11121 / KW20 / Rd)).